The chain runs to 279 residues: Thioredoxin-like 1-2, chloroplastic (279 aa).

Residues 1-34 (MAATAAQAVAVKGSVAVPPCGSRGRRRGAVASVR) constitute a chloroplast transit peptide. The 143-residue stretch at 61–203 (PRRSRPVPRN…FRDALAKHKP (143 aa)) folds into the Thioredoxin domain. Catalysis depends on nucleophile residues cysteine 126 and cysteine 129. The cysteines at positions 126 and 129 are disulfide-linked. The interval 242-279 (GDAAAAQELDRGSTKLSPPAKPLVKQGSEERSLVSSGR) is disordered.

It belongs to the thioredoxin family.

It is found in the plastid. The protein resides in the chloroplast. Its function is as follows. Probable thiol-disulfide oxidoreductase that may participate in various redox reactions. This Oryza sativa subsp. japonica (Rice) protein is Thioredoxin-like 1-2, chloroplastic.